The chain runs to 112 residues: UPF0102 protein JJD26997_0163 (112 aa).

This sequence belongs to the UPF0102 family.

In Campylobacter jejuni subsp. doylei (strain ATCC BAA-1458 / RM4099 / 269.97), this protein is UPF0102 protein JJD26997_0163.